The chain runs to 381 residues: S-adenosylmethionine synthase (381 aa).

Residue His-15 coordinates ATP. Asp-17 contacts Mg(2+). Glu-43 serves as a coordination point for K(+). Positions 56 and 99 each coordinate L-methionine. Residues 99 to 109 are flexible loop; that stretch reads QSLDIAQGVDN. Residues 164-166, 230-231, Asp-239, 245-246, and Lys-266 contribute to the ATP site; these read DGK, RF, and RK. Asp-239 contacts L-methionine. Lys-270 is an L-methionine binding site.

This sequence belongs to the AdoMet synthase family. Homotetramer; dimer of dimers. The cofactor is Mg(2+). K(+) serves as cofactor.

It is found in the cytoplasm. The enzyme catalyses L-methionine + ATP + H2O = S-adenosyl-L-methionine + phosphate + diphosphate. It functions in the pathway amino-acid biosynthesis; S-adenosyl-L-methionine biosynthesis; S-adenosyl-L-methionine from L-methionine: step 1/1. Catalyzes the formation of S-adenosylmethionine (AdoMet) from methionine and ATP. The overall synthetic reaction is composed of two sequential steps, AdoMet formation and the subsequent tripolyphosphate hydrolysis which occurs prior to release of AdoMet from the enzyme. The polypeptide is S-adenosylmethionine synthase (Legionella jeonii).